A 937-amino-acid chain; its full sequence is ABC transporter A family member 4 (937 aa).

7 helical membrane passes run 34-54, 340-360, 394-414, 423-443, 455-475, 478-498, and 528-548; these read LIVIPFYLCVLLVGIQVLFDT, IASVIGPIFLTWVIVLLFPVI, FLAISTLYIICLMIFGSAIGL, SIQFIFYFLCINLQISIAFLV, VAAYLYVFGSGLLGGFLFQFM, GLSFPRGWIFVMELYPGFSLY, and AMDEVFYIIIIEWFLALIAAY. One can recognise an ABC transporter domain in the interval 618–852; sequence DKLKKVYPGR…YGGSYVLTMT (235 aa). 653-660 contacts ATP; sequence GPNGAGKT.

It belongs to the ABC transporter superfamily. ABCA family. CPR flippase (TC 3.A.1.211) subfamily.

It is found in the membrane. The sequence is that of ABC transporter A family member 4 (ABCA4) from Arabidopsis thaliana (Mouse-ear cress).